The chain runs to 331 residues: Hyaluronidase B (331 aa).

Intrachain disulfides connect C19–C308 and C185–C197. Residue N79 is glycosylated (N-linked (GlcNAc...) asparagine). The Proton donor role is filled by E109.

It belongs to the glycosyl hydrolase 56 family. In terms of tissue distribution, expressed by the venom gland.

The protein localises to the secreted. The catalysed reaction is Random hydrolysis of (1-&gt;4)-linkages between N-acetyl-beta-D-glucosamine and D-glucuronate residues in hyaluronate.. Hydrolyzes high molecular weight hyaluronic acid to produce small oligosaccharides. The protein is Hyaluronidase B of Vespa velutina (Asian yellow-legged hornet).